A 532-amino-acid chain; its full sequence is UDP-glucuronosyltransferase 1A4 (532 aa).

An N-terminal signal peptide occupies residues 1–27 (MVLGVWITLWRLVRLLLLLCVLPWAEG). N-linked (GlcNAc...) asparagine glycans are attached at residues Asn141 and Asn295. A helical transmembrane segment spans residues 490-506 (VIGFLLAIVLTVAFVTF).

Belongs to the UDP-glycosyltransferase family. In terms of assembly, homodimers. Homooligomer. Interacts with UGT1A1, UGT1A3, UGT1A6, UGT1A7, UGT1A8, UGT1A9 and UGT1A10 to form heterodimers.

Its subcellular location is the endoplasmic reticulum membrane. The enzyme catalyses glucuronate acceptor + UDP-alpha-D-glucuronate = acceptor beta-D-glucuronoside + UDP + H(+). The catalysed reaction is calcidiol + UDP-alpha-D-glucuronate = calcidiol 25-O-(beta-D-glucuronide) + UDP + H(+). It catalyses the reaction calcidiol + UDP-alpha-D-glucuronate = calcidiol 3-O-(beta-D-glucuronide) + UDP + H(+). It carries out the reaction calcitriol + UDP-alpha-D-glucuronate = calcitriol 25-O-(beta-D-glucuronide) + UDP + H(+). The enzyme catalyses (5Z,8Z,11Z,14Z)-eicosatetraenoate + UDP-alpha-D-glucuronate = O-[(5Z),(8Z),(11Z),(14Z)-eicosatetraenoyl]-beta-D-glucuronate + UDP. The catalysed reaction is 15-hydroxy-(5Z,8Z,11Z,13E)-eicosatetraenoate + UDP-alpha-D-glucuronate = 15-O-(beta-D-glucuronosyl)-(5Z,8Z,11Z,14Z)-eicosatetraenoate + UDP + H(+). It catalyses the reaction 20-hydroxy-(5Z,8Z,11Z,14Z)-eicosatetraenoate + UDP-alpha-D-glucuronate = 20-O-(beta-D-glucuronosyl)-(5Z,8Z,11Z,14Z)-eicosatetraenoate + UDP + H(+). In terms of biological role, UDP-glucuronosyltransferase (UGT) that catalyzes phase II biotransformation reactions in which lipophilic substrates are conjugated with glucuronic acid to increase the metabolite's water solubility, thereby facilitating excretion into either the urine or bile. Essential for the elimination and detoxification of drugs, xenobiotics and endogenous compounds. Involved in the glucuronidation of calcidiol, which is the major circulating form of vitamin D3 essential for the regulation of calcium and phosphate homeostasis. Also glucuronidates the biologically active form of vitamin D3, calcitriol, probably leading to its biliary transport and intestinal reabsorption. Involved in the glucuronidation of arachidonic acid (AA) and AA-derived eicosanoids including 15-HETE, 20-HETE and PGB1. The polypeptide is UDP-glucuronosyltransferase 1A4 (Ugt1a4) (Oryctolagus cuniculus (Rabbit)).